We begin with the raw amino-acid sequence, 98 residues long: RNA-binding protein Hfq (98 aa).

A Sm domain is found at 11 to 71 (DVFLNHVRRS…ISTVMPATPV (61 aa)).

This sequence belongs to the Hfq family. Homohexamer.

Its function is as follows. RNA chaperone that binds small regulatory RNA (sRNAs) and mRNAs to facilitate mRNA translational regulation in response to envelope stress, environmental stress and changes in metabolite concentrations. Also binds with high specificity to tRNAs. In Gluconacetobacter diazotrophicus (strain ATCC 49037 / DSM 5601 / CCUG 37298 / CIP 103539 / LMG 7603 / PAl5), this protein is RNA-binding protein Hfq.